A 238-amino-acid polypeptide reads, in one-letter code: ATP synthase subunit a (238 aa).

The next 6 membrane-spanning stretches (helical) occupy residues 18-38 (TTNL…VFAL), 76-96 (FGLY…IGLF), 114-134 (PIVT…SGVA), 150-170 (FKVW…TLGL), 188-208 (GIAF…ALIW), and 211-231 (FSVF…SVYI).

Belongs to the ATPase A chain family. As to quaternary structure, F-type ATPases have 2 components, CF(1) - the catalytic core - and CF(0) - the membrane proton channel. CF(1) has five subunits: alpha(3), beta(3), gamma(1), delta(1), epsilon(1). CF(0) has three main subunits: a(1), b(2) and c(9-12). The alpha and beta chains form an alternating ring which encloses part of the gamma chain. CF(1) is attached to CF(0) by a central stalk formed by the gamma and epsilon chains, while a peripheral stalk is formed by the delta and b chains.

It is found in the cell membrane. Key component of the proton channel; it plays a direct role in the translocation of protons across the membrane. The protein is ATP synthase subunit a of Pediococcus pentosaceus (strain ATCC 25745 / CCUG 21536 / LMG 10740 / 183-1w).